The sequence spans 100 residues: Large ribosomal subunit protein bL21 (100 aa).

Belongs to the bacterial ribosomal protein bL21 family. In terms of assembly, part of the 50S ribosomal subunit. Contacts protein L20.

This protein binds to 23S rRNA in the presence of protein L20. In Corynebacterium kroppenstedtii (strain DSM 44385 / JCM 11950 / CIP 105744 / CCUG 35717), this protein is Large ribosomal subunit protein bL21.